Consider the following 273-residue polypeptide: 29 kDa ribonucleoprotein A, chloroplastic (273 aa).

The transit peptide at 1 to 58 directs the protein to the chloroplast; the sequence is MASSASSLHFLSLTPQTLPLPKPTSQTTSLSFFSLPPSSLNLSLSSSSSCFSSRFVRK. The region spanning 87–165 is the RRM 1 domain; it reads LKIFVGNLPF…RALRVNSGPP (79 aa). Residues 156–181 are disordered; that stretch reads RALRVNSGPPPEKRENSSFRGGSRGG. Residues 166 to 187 form a linker (Gly-rich) region; sequence PEKRENSSFRGGSRGGGSFDSS. Residues 188-266 enclose the RRM 2 domain; that stretch reads NRVYVGNLAW…RAIRVSPAEA (79 aa).

The protein resides in the plastid. Its subcellular location is the chloroplast. Could be involved in splicing and/or processing of chloroplast RNA's. The sequence is that of 29 kDa ribonucleoprotein A, chloroplastic from Nicotiana sylvestris (Wood tobacco).